The following is a 204-amino-acid chain: Large ribosomal subunit protein uL4 (204 aa).

The tract at residues 47 to 69 is disordered; sequence KAQKTRAEVSGGGKKPWRQKGTG.

The protein belongs to the universal ribosomal protein uL4 family. In terms of assembly, part of the 50S ribosomal subunit.

In terms of biological role, one of the primary rRNA binding proteins, this protein initially binds near the 5'-end of the 23S rRNA. It is important during the early stages of 50S assembly. It makes multiple contacts with different domains of the 23S rRNA in the assembled 50S subunit and ribosome. Functionally, forms part of the polypeptide exit tunnel. In Cellvibrio japonicus (strain Ueda107) (Pseudomonas fluorescens subsp. cellulosa), this protein is Large ribosomal subunit protein uL4.